The following is a 177-amino-acid chain: O-acetyl-ADP-ribose deacetylase (177 aa).

In terms of domain architecture, Macro spans M1 to G175. Substrate-binding positions include D11–I12, N25, G33–D35, and S122–Y126. The Proton acceptor role is filled by D35.

This sequence belongs to the MacroD-type family. YmdB subfamily. As to quaternary structure, homodimer. Interacts with RNase III.

It carries out the reaction 3''-O-acetyl-ADP-D-ribose + H2O = ADP-D-ribose + acetate + H(+). It catalyses the reaction 2''-O-acetyl-ADP-D-ribose + H2O = ADP-D-ribose + acetate + H(+). In terms of biological role, deacetylates O-acetyl-ADP ribose to yield ADP-ribose and free acetate. Down-regulates ribonuclease 3 (RNase III) activity. Acts by interacting directly with the region of the ribonuclease that is required for dimerization/activation. This is O-acetyl-ADP-ribose deacetylase from Escherichia fergusonii (strain ATCC 35469 / DSM 13698 / CCUG 18766 / IAM 14443 / JCM 21226 / LMG 7866 / NBRC 102419 / NCTC 12128 / CDC 0568-73).